The primary structure comprises 1829 residues: Sodium channel protein type 4 subunit alpha A (1829 aa).

Residues 1-124 (MARLLPPTGT…RGAIKILIHS (124 aa)) lie on the Cytoplasmic side of the membrane. The segment at 32–52 (STREELEGAEEEPQAPSSDLE) is disordered. The stretch at 106-421 (CISPFSIVRR…VVAMAYDEQN (316 aa)) is one I repeat. A helical transmembrane segment spans residues 125 to 143 (LFSMFIMITILSNCVFMTM). Over 144–150 (SNPPAWS) the chain is Extracellular. A helical transmembrane segment spans residues 151–171 (KTVEYVFTGIYTFEATVKVLS). The Cytoplasmic portion of the chain corresponds to 172–185 (RGFCIGPFTFLRDP). The chain crosses the membrane as a helical span at residues 186 to 203 (WNWLDFMVISMAYVTEFV). Residues 204-209 (DLGNVS) are Extracellular-facing. The N-linked (GlcNAc...) asparagine glycan is linked to N207. The chain crosses the membrane as a helical span at residues 210 to 226 (ALRTFRVLRALKTITVI). Residues 227–245 (PGLKTIVGALIQSVKKMID) lie on the Cytoplasmic side of the membrane. A helical transmembrane segment spans residues 246 to 265 (VMILTIFALAVFALIGLQLF). At 266-358 (MGNLRQKCIR…PNYGYTSYDN (93 aa)) the chain is on the extracellular side. C273 and C327 are joined by a disulfide. N280, N293, and N329 each carry an N-linked (GlcNAc...) asparagine glycan. C336 and C342 are disulfide-bonded. The segment at residues 359–383 (FGWAFLALFRLMTQDFWENLFQLTL) is an intramembrane region (pore-forming). The Extracellular segment spans residues 384 to 390 (RAAGKTY). A helical membrane pass occupies residues 391–411 (MIFFVVVIFLGSFYLINLILA). The Cytoplasmic portion of the chain corresponds to 412–582 (VVAMAYDEQN…KWVHFVVMDP (171 aa)). A compositionally biased stretch (polar residues) spans 446-467 (ETGSKASLASQKTQSRGSNRTG). The disordered stretch occupies residues 446–468 (ETGSKASLASQKTQSRGSNRTGS). The II repeat unit spans residues 564 to 836 (CCAPWILFKK…QIAIGRITRG (273 aa)). The helical transmembrane segment at 583–601 (FVDLGITICIVLNTLFMAM) threads the bilayer. Residues 602-612 (EHYPMSPHFEH) lie on the Extracellular side of the membrane. The chain crosses the membrane as a helical span at residues 613 to 632 (VLSVGNLVFTGIFTAEMVFK). Residues 633–646 (LIAMDPYYYFQVGW) lie on the Cytoplasmic side of the membrane. Residues 647 to 666 (NIFDSIIVTLSLVELGLANV) form a helical membrane-spanning segment. The Extracellular segment spans residues 667 to 668 (QG). The helical transmembrane segment at 669–686 (LSVLRSFRLLRVFKLAKS) threads the bilayer. Over 687–702 (WPTLNMLIKIIGNSVG) the chain is Cytoplasmic. Residues 703–721 (ALGNLTLVLAIIVFIFAVV) traverse the membrane as a helical segment. At 722–750 (GMQLFGKSYKDCVCKISEDCELPRWHMND) the chain is on the extracellular side. C735 and C741 are joined by a disulfide. Residues 751–771 (FFHSFLIVFRILCGEWIETMW) constitute an intramembrane region (pore-forming). At 772–782 (DCMEVAGASMC) the chain is on the extracellular side. C773 and C782 are oxidised to a cystine. A helical transmembrane segment spans residues 783–801 (LIVFMMVMVIGNLVVLNLF). Over 802–998 (LALLLSSFSG…TCFTIVEHDY (197 aa)) the chain is Cytoplasmic. The interval 901-957 (SDVEEDEDSESSDEEDAKATLNDGDSSVCSTVDYQPPEPEPEPEEVEEEEPEPEEPE) is disordered. Acidic residues predominate over residues 902 to 916 (DVEEDEDSESSDEED). Polar residues predominate over residues 923-933 (DGDSSVCSTVD). Positions 939–957 (PEPEPEEVEEEEPEPEEPE) are enriched in acidic residues. Residues 979 to 1292 (WGKKWWNLRR…KKYYNAMKKL (314 aa)) form an III repeat. The helical transmembrane segment at 999–1016 (FETFIIFMILLSSGALAF) threads the bilayer. At 1017 to 1029 (EDINIERRRVIKT) the chain is on the extracellular side. Residues 1030-1048 (ILEYADKVFTYIFIVEMLL) form a helical membrane-spanning segment. The Cytoplasmic portion of the chain corresponds to 1049–1062 (KWVAYGFKTYFTNA). Residues 1063-1081 (WCWLDFLIVDVSLVSLTAN) form a helical membrane-spanning segment. Over 1082-1089 (LMGYSELG) the chain is Extracellular. The chain crosses the membrane as a helical span at residues 1090–1108 (AIKSLRTLRALRPLRALSR). Over 1109 to 1125 (FEGMRVVVNALVGAIPS) the chain is Cytoplasmic. Residues 1126-1145 (IFNVLLVCLIFWLIFSIMGV) traverse the membrane as a helical segment. Topologically, residues 1146 to 1196 (NLFAGKFYHCINTTTEERIPMDVVNNKSDCMALMYTNEVRWVNVKVNYDNV) are extracellular. A disulfide bond links C1155 and C1175. N-linked (GlcNAc...) asparagine glycans are attached at residues N1157 and N1171. The segment at residues 1197–1218 (GLGYLSLLQIATFKGWMDIMYA) is an intramembrane region (pore-forming). The Extracellular segment spans residues 1219–1235 (AVDSREVDEQPSYEINL). The chain crosses the membrane as a helical span at residues 1236-1257 (YMYLYFVIFIIFGSFFTLNLFI). Residues 1258 to 1320 (GVIIDNFNQQ…LVFDFISKQF (63 aa)) lie on the Cytoplasmic side of the membrane. The segment at 1276–1278 (IFM) is important for rapid channel inactivation. The stretch at 1301–1599 (IPRPSNIIQG…WEKFDVDATQ (299 aa)) is one IV repeat. Residues 1321 to 1338 (FDIFIMVLICLNMVTMMI) traverse the membrane as a helical segment. At 1339–1349 (ETDDQSAEKEY) the chain is on the extracellular side. Residues 1350 to 1368 (VLYQINLVFIVVFTSECVL) form a helical membrane-spanning segment. Over 1369–1380 (KLFALRQYFFTI) the chain is Cytoplasmic. The helical transmembrane segment at 1381–1398 (GWNVFDFVVVILSIAGLM) threads the bilayer. Residues 1399–1411 (LSDIIEKYFVSPT) are Extracellular-facing. Residues 1412–1428 (LFRVIRLARIGRVLRLI) form a helical membrane-spanning segment. Over 1429–1447 (RGAKGIRTLLFALMMSLPA) the chain is Cytoplasmic. A helical transmembrane segment spans residues 1448-1465 (LFNIGLLLFLIMFIFSIF). The Extracellular portion of the chain corresponds to 1466 to 1487 (GMSNFAYVKKQAGIDDIFNFET). Positions 1488–1510 (FGGSIICLFEITTSAGWDGLLLP) form an intramembrane region, pore-forming. The Extracellular portion of the chain corresponds to 1511–1540 (ILNSGPPDCDPDFENPGTDVRGNCGNPGMG). C1519 and C1534 form a disulfide bridge. The helical transmembrane segment at 1541 to 1563 (IMFFCSYIIMSFLVVVNMYIAII) threads the bilayer. At 1564–1829 (LENFNNAQEE…NATTIKESIV (266 aa)) the chain is on the cytoplasmic side. Residues 1693 to 1722 (EERAAIAVQRIYRRHLLKRAIRYACFMRRS) form the IQ domain. The segment at 1765-1786 (PMRPNSQPPKPSQVTQTRASVT) is disordered.

This sequence belongs to the sodium channel (TC 1.A.1.10) family. Nav1.4/SCN4A subfamily. In terms of assembly, voltage-gated sodium (Nav) channels consist of an ion-conducting alpha subunit which is functional on its own associated with regulatory beta subunits. Expressed in skeletal muscle, brain, spinal cord, and eye.

Its subcellular location is the cell membrane. It carries out the reaction Na(+)(in) = Na(+)(out). In terms of biological role, pore-forming subunit of a voltage-gated sodium (Nav) channel that directly mediates the depolarizing phase of action potentials in excitable membranes. Navs, also called VGSCs (voltage-gated sodium channels) or VDSCs (voltage-dependent sodium channels), operate by switching between closed and open conformations depending on the voltage difference across the membrane. In the open conformation they allow Na(+) ions to selectively pass through the pore, along their electrochemical gradient. The influx of Na+ ions provokes membrane depolarization, initiating the propagation of electrical signals throughout cells and tissues. The polypeptide is Sodium channel protein type 4 subunit alpha A (scn4aa) (Danio rerio (Zebrafish)).